Here is a 699-residue protein sequence, read N- to C-terminus: Elongation factor G (699 aa).

Residues 8–288 enclose the tr-type G domain; sequence EDYRNFGIMA…AVVDYLPSPM (281 aa). Residues 17 to 24, 86 to 90, and 140 to 143 contribute to the GTP site; these read AHIDAGKT, DTPGH, and NKMD.

This sequence belongs to the TRAFAC class translation factor GTPase superfamily. Classic translation factor GTPase family. EF-G/EF-2 subfamily.

The protein resides in the cytoplasm. Catalyzes the GTP-dependent ribosomal translocation step during translation elongation. During this step, the ribosome changes from the pre-translocational (PRE) to the post-translocational (POST) state as the newly formed A-site-bound peptidyl-tRNA and P-site-bound deacylated tRNA move to the P and E sites, respectively. Catalyzes the coordinated movement of the two tRNA molecules, the mRNA and conformational changes in the ribosome. In Rhizobium johnstonii (strain DSM 114642 / LMG 32736 / 3841) (Rhizobium leguminosarum bv. viciae), this protein is Elongation factor G.